The primary structure comprises 586 residues: Phosphatase and actin regulator 1 (586 aa).

Positions 62 to 83 (RRRSKFATLGRLFKPWKWRKKK) match the Nuclear localization signal motif. The stretch at 92-117 (AALERKISMRQSREELIKRGVLKEMY) is one RPEL 1 repeat. The disordered stretch occupies residues 373-414 (ECEDDKENVPHETSYDDSSCLYSRDEEEDDDDDDDDEDDDSS). Residues 397–413 (DEEEDDDDDDDDEDDDS) show a composition bias toward acidic residues. RPEL repeat units lie at residues 428-453 (DSLAIKLSNRPSKRELEEKNILPMQT), 466-491 (TKLTRRLSQRPTAEELEQRNILKPRN), and 504-529 (RRLTRKLSQRPTVEELREKKILISFS).

This sequence belongs to the phosphatase and actin regulator family. In terms of assembly, interacts (via RPEL repeats) with ACTA1.

The protein resides in the cytoplasm. The protein localises to the synapse. It is found in the nucleus. Functionally, binds actin monomers (G actin) and plays a role in the reorganization of the actin cytoskeleton and in formation of actin stress fibers. This is Phosphatase and actin regulator 1 (phactr1) from Xenopus laevis (African clawed frog).